The primary structure comprises 91 residues: uncharacterized protein (91 aa).

An N-terminal signal peptide occupies residues 1–21; sequence MKQLLASPSLQLVTYPASATA.

The protein belongs to the BhsA/McbA family.

Its subcellular location is the periplasm. This is an uncharacterized protein from Escherichia coli O157:H7.